Reading from the N-terminus, the 129-residue chain is Follitropin subunit beta (129 aa).

Residues 1 to 20 (MKTLQFFFLFCCWKAICCNS) form the signal peptide. 6 disulfides stabilise this stretch: Cys-21–Cys-69, Cys-35–Cys-84, Cys-38–Cys-122, Cys-46–Cys-100, Cys-50–Cys-102, and Cys-105–Cys-112. N-linked (GlcNAc...) asparagine glycosylation is found at Asn-25 and Asn-42.

Belongs to the glycoprotein hormones subunit beta family. As to quaternary structure, heterodimer. The active follitropin is a heterodimer composed of an alpha chain/CGA shared with other hormones and a unique beta chain/FSHB shown here.

It is found in the secreted. Functionally, together with the alpha chain CGA constitutes follitropin, the follicle-stimulating hormone, and provides its biological specificity to the hormone heterodimer. Binds FSHR, a G protein-coupled receptor, on target cells to activate downstream signaling pathways. Follitropin is involved in follicle development and spermatogenesis in reproductive organs. In Pan troglodytes (Chimpanzee), this protein is Follitropin subunit beta (FSHB).